The following is a 102-amino-acid chain: Small ribosomal subunit protein uS10 (102 aa).

Belongs to the universal ribosomal protein uS10 family. As to quaternary structure, part of the 30S ribosomal subunit.

In terms of biological role, involved in the binding of tRNA to the ribosomes. The chain is Small ribosomal subunit protein uS10 from Leptospira borgpetersenii serovar Hardjo-bovis (strain JB197).